The primary structure comprises 363 residues: 3-isopropylmalate dehydrogenase (363 aa).

Residue 79–92 (GPKWEHLPPNDQPE) coordinates NAD(+). Substrate is bound by residues R100, R110, R139, and D228. Mg(2+)-binding residues include D228, D252, and D256. Position 286–298 (286–298 (GSAPDIAGKNIAN)) interacts with NAD(+).

This sequence belongs to the isocitrate and isopropylmalate dehydrogenases family. LeuB type 1 subfamily. In terms of assembly, homodimer. The cofactor is Mg(2+). It depends on Mn(2+) as a cofactor.

It localises to the cytoplasm. It carries out the reaction (2R,3S)-3-isopropylmalate + NAD(+) = 4-methyl-2-oxopentanoate + CO2 + NADH. Its pathway is amino-acid biosynthesis; L-leucine biosynthesis; L-leucine from 3-methyl-2-oxobutanoate: step 3/4. Functionally, catalyzes the oxidation of 3-carboxy-2-hydroxy-4-methylpentanoate (3-isopropylmalate) to 3-carboxy-4-methyl-2-oxopentanoate. The product decarboxylates to 4-methyl-2 oxopentanoate. The sequence is that of 3-isopropylmalate dehydrogenase from Vibrio vulnificus (strain YJ016).